Consider the following 65-residue polypeptide: Photosystem II reaction center protein Z (65 aa).

2 helical membrane-spanning segments follow: residues 8–28 and 41–61; these read AVFA…VALA and YAGA…DSVV.

It belongs to the PsbZ family. PSII is composed of 1 copy each of membrane proteins PsbA, PsbB, PsbC, PsbD, PsbE, PsbF, PsbH, PsbI, PsbJ, PsbK, PsbL, PsbM, PsbT, PsbX, PsbY, PsbZ, Psb30/Ycf12, at least 3 peripheral proteins of the oxygen-evolving complex and a large number of cofactors. It forms dimeric complexes.

It is found in the plastid. The protein resides in the cyanelle thylakoid membrane. Functionally, may control the interaction of photosystem II (PSII) cores with the light-harvesting antenna, regulates electron flow through the 2 photosystem reaction centers. PSII is a light-driven water plastoquinone oxidoreductase, using light energy to abstract electrons from H(2)O, generating a proton gradient subsequently used for ATP formation. The chain is Photosystem II reaction center protein Z from Cyanophora paradoxa.